The following is a 99-amino-acid chain: Large ribosomal subunit protein bL28 (99 aa).

A disordered region spans residues 1–25; that stretch reads MSRKCAVTGKGVQTGNNVSHANNKS. Residues 11–22 show a composition bias toward polar residues; it reads GVQTGNNVSHAN.

Belongs to the bacterial ribosomal protein bL28 family.

In Rhodospirillum centenum (strain ATCC 51521 / SW), this protein is Large ribosomal subunit protein bL28.